Here is a 324-residue protein sequence, read N- to C-terminus: Methenyltetrahydromethanopterin cyclohydrolase (324 aa).

It belongs to the MCH family.

It localises to the cytoplasm. It carries out the reaction 5,10-methenyl-5,6,7,8-tetrahydromethanopterin + H2O = N(5)-formyl-5,6,7,8-tetrahydromethanopterin + H(+). It participates in one-carbon metabolism; formaldehyde degradation; formate from formaldehyde (H(4)MPT route): step 3/5. In terms of biological role, catalyzes the hydrolysis of methenyl-H(4)MPT(+) to 5-formyl-H(4)MPT. The polypeptide is Methenyltetrahydromethanopterin cyclohydrolase (Methylobacterium sp. (strain 4-46)).